The following is a 445-amino-acid chain: RCC1 domain-containing protein RUG3, mitochondrial (445 aa).

A mitochondrion-targeting transit peptide spans 1-22 (MAALSHRLRSFTRRFSSTRTTQ). 7 RCC1 repeats span residues 47–101 (TLQL…DSSS), 118–169 (DGDL…ALTH), 171–221 (GDVF…AITE), 222–279 (SGEL…ALTK), 280–331 (EGQL…ALTE), 333–383 (GKVL…AITD), and 385–442 (GELW…CLVS).

As to quaternary structure, interacts with ATM. Mostly expressed in roots and rosette leaves of young seedlings, and, to a lower extent, in the flowers and siliques of mature plants. Preferentially expressed in the vascular tissues.

The protein localises to the mitochondrion. Regulates DNA damage response (DDR) synergistically with ATM. Together with ATM, involved in the splicing of the ND2/NAD2 mRNA. Required for the accumulation of mitochondrial respiratory chain complex I. Negative regulator of plant responses to abscisic acid (ABA). May have a pivotal role in vegetative growth and the phase transition from vegetative to reproductive growth. This is RCC1 domain-containing protein RUG3, mitochondrial from Arabidopsis thaliana (Mouse-ear cress).